The sequence spans 561 residues: DNA ligase B (561 aa).

Catalysis depends on lysine 125, which acts as the N6-AMP-lysine intermediate.

It belongs to the NAD-dependent DNA ligase family. LigB subfamily.

It catalyses the reaction NAD(+) + (deoxyribonucleotide)n-3'-hydroxyl + 5'-phospho-(deoxyribonucleotide)m = (deoxyribonucleotide)n+m + AMP + beta-nicotinamide D-nucleotide.. Its function is as follows. Catalyzes the formation of phosphodiester linkages between 5'-phosphoryl and 3'-hydroxyl groups in double-stranded DNA using NAD as a coenzyme and as the energy source for the reaction. The chain is DNA ligase B from Salmonella dublin (strain CT_02021853).